We begin with the raw amino-acid sequence, 182 residues long: ATP-dependent protease subunit HslV (182 aa).

Thr-7 is a catalytic residue. 3 residues coordinate Na(+): Gly-162, Cys-165, and Thr-168.

Belongs to the peptidase T1B family. HslV subfamily. In terms of assembly, a double ring-shaped homohexamer of HslV is capped on each side by a ring-shaped HslU homohexamer. The assembly of the HslU/HslV complex is dependent on binding of ATP.

The protein localises to the cytoplasm. The catalysed reaction is ATP-dependent cleavage of peptide bonds with broad specificity.. With respect to regulation, allosterically activated by HslU binding. Functionally, protease subunit of a proteasome-like degradation complex believed to be a general protein degrading machinery. In Legionella pneumophila subsp. pneumophila (strain Philadelphia 1 / ATCC 33152 / DSM 7513), this protein is ATP-dependent protease subunit HslV.